A 111-amino-acid polypeptide reads, in one-letter code: MLLLFCICCVFIKLVLAEVNLTFVDYAKLPPNYAELLANLIDQHGLMLFDTADVRIEAYNYLLNSITETNTDTDAYLCQLLTGQYTTDCYIFGDSVYEGPENINPSTRYID.

An N-terminal signal peptide occupies residues 1–17 (MLLLFCICCVFIKLVLA). N-linked (GlcNAc...) asparagine glycosylation is present at Asn20.

It belongs to the UPF0321 family.

This is UPF0321 protein P20C8.02c from Schizosaccharomyces pombe (strain 972 / ATCC 24843) (Fission yeast).